A 367-amino-acid chain; its full sequence is MSDTRPQIKTWIEGIHAYVPGKATGAQGQALIKLSANENPLGCSPKALEALDAPGNPATYPDPDAKALRAKLAEVHGLDAGRIVCGTGSDELLNLAAQAFAGPGDEVLFSTYSFSVYDIAARRCGATPVEAPDADYAADVDALLAAVTDKTRVVFVANPNNPTGSFLPRDEIARLHAGLPQDVLFVLDQAYAEYLTPEEDDGGFALAAAHENVLVTRTFSKAYGLAGERIGWATGAPHFIDALNRVRGPFNVTNSGQAAALAGVDDQNFIDRTRDHNTRELTRFTDAMAALGNHGIRPLPSKANFALVLFEGTLAAETALSALADAGYAVRHLPGQGLPHGLRITIGTAEDMDRIARTIAEAAEAAQ.

An N6-(pyridoxal phosphate)lysine modification is found at lysine 221.

Belongs to the class-II pyridoxal-phosphate-dependent aminotransferase family. Histidinol-phosphate aminotransferase subfamily. In terms of assembly, homodimer. Pyridoxal 5'-phosphate is required as a cofactor.

It catalyses the reaction L-histidinol phosphate + 2-oxoglutarate = 3-(imidazol-4-yl)-2-oxopropyl phosphate + L-glutamate. It functions in the pathway amino-acid biosynthesis; L-histidine biosynthesis; L-histidine from 5-phospho-alpha-D-ribose 1-diphosphate: step 7/9. In Erythrobacter litoralis (strain HTCC2594), this protein is Histidinol-phosphate aminotransferase.